Consider the following 214-residue polypeptide: Single-pass membrane and coiled-coil domain-containing protein 1 (214 aa).

A coiled-coil region spans residues Thr-6–Lys-42. A helical membrane pass occupies residues Ala-65–Ile-81.

Its subcellular location is the membrane. The polypeptide is Single-pass membrane and coiled-coil domain-containing protein 1 (SMCO1) (Homo sapiens (Human)).